The sequence spans 126 residues: Fluoride-specific ion channel FluC (126 aa).

4 helical membrane passes run 9-29 (LAVF…GFQL), 35-55 (LTAT…LYAI), 63-83 (LLHL…SFVL), and 94-114 (WSIG…AAIL). Na(+) is bound by residues Gly73 and Ser76.

Belongs to the fluoride channel Fluc/FEX (TC 1.A.43) family.

It localises to the cell inner membrane. The catalysed reaction is fluoride(in) = fluoride(out). Its activity is regulated as follows. Na(+) is not transported, but it plays an essential structural role and its presence is essential for fluoride channel function. Functionally, fluoride-specific ion channel. Important for reducing fluoride concentration in the cell, thus reducing its toxicity. The polypeptide is Fluoride-specific ion channel FluC (Ruegeria pomeroyi (strain ATCC 700808 / DSM 15171 / DSS-3) (Silicibacter pomeroyi)).